Here is a 954-residue protein sequence, read N- to C-terminus: Lysine-specific demethylase JMJ14 (954 aa).

The tract at residues Met1–Ser46 is disordered. The span at Glu29–Lys38 shows a compositional bias: polar residues. Residues Ala56 to Pro97 enclose the JmjN domain. The Nuclear localization signal 1 motif lies at Arg136 to Lys143. The tract at residues Arg148–Gly170 is disordered. The JmjC domain maps to Gln263–Ser429. 3 residues coordinate Fe cation: His309, Glu311, and His397. The short motif at Trp470–Asp477 is the Nuclear localization signal 2 element. Cys519, Cys522, Cys533, Cys535, Cys542, His545, Cys550, and Cys552 together coordinate Zn(2+). The C5HC2 zinc-finger motif lies at Cys519–Leu571. A disordered region spans residues Ser641 to Ile670. Positions Val645–Ile670 are enriched in basic and acidic residues. In terms of domain architecture, FYR N-terminal spans Ala726 to Ala784. An FYR C-terminal domain is found at Leu786–Lys876. The tract at residues Glu884–Asp905 is disordered. Basic and acidic residues predominate over residues Pro885–Asp905.

It belongs to the JARID1 histone demethylase family. Interacts with NAC050 and NAC051/NAC052. Interacts with THAL in the nucleus. Fe(2+) serves as cofactor. In terms of tissue distribution, expressed in shoot apex, primary root tip, trichomes of young leaves, leaf vascular tissues, anther filaments and styles. Detected in inflorescences, leaves, stems, roots and siliques. Mostly expressed in floral organs, and, at low levels, in other organs.

Its subcellular location is the nucleus. It is found in the nucleoplasm. The catalysed reaction is N(6),N(6),N(6)-trimethyl-L-lysyl(4)-[histone H3] + 2-oxoglutarate + O2 = N(6),N(6)-dimethyl-L-lysyl(4)-[histone H3] + formaldehyde + succinate + CO2. The enzyme catalyses N(6),N(6)-dimethyl-L-lysyl(4)-[histone H3] + 2-oxoglutarate + O2 = N(6)-methyl-L-lysyl(4)-[histone H3] + formaldehyde + succinate + CO2. It catalyses the reaction N(6)-methyl-L-lysyl(4)-[histone H3] + 2-oxoglutarate + O2 = L-lysyl(4)-[histone H3] + formaldehyde + succinate + CO2. It carries out the reaction N(6),N(6),N(6)-trimethyl-L-lysyl(4)-[histone H3] + 3 2-oxoglutarate + 3 O2 = L-lysyl(4)-[histone H3] + 3 formaldehyde + 3 succinate + 3 CO2. Its function is as follows. Transcriptional repressor. Histone demethylase that demethylates 'Lys-4' (H3K4me) of histone H3 with a higher activity for H3K4me3 and H3K4me2 than H3K4me1. No activity on H3K9me3/2, H3K36me3/2 and H3K27me3/2. Function as a nocturne 'eraser' to counteract the diurnal 'writer' methylase activity of ATXR3/SDG2 thus orchestrating the circadian rhythm of histone modifications (e.g. H3K4me3) and modulating the rhythmic expression of diurnal target genes; this mechanism also relies on the circadian clock oscillators CCA1 and LHY. Involved in a negative regulation of root meristem growth upon suboptimal root growth conditions. Represses FT and TSF expression to inhibit the floral transition. Binds around the transcription start site of the FT locus. Involved in the DRM2-mediated maintenance of DNA methylation, but not required for the de novo DNA methylation. Required for demethylating histone H3K4me3 at the target of RNA silencing. Counteracts the DNA methylation of expressed transgenes; specific attenuation of transgene DNA methylation enhances the production of aberrant RNAs (e.g. uncapped and antisense) that readily induce systemic RDR6-dependent post-transcriptional transgene silencing (PTGS) spreading. Together with NAC051/NAC052 and NAC050, regulates gene expression and flowering time, probably by the promotion of RNA-mediated gene silencing. Together with JMJ16 and JMJ17, required for plant growth and development. Promotes local and systemic immunity (especially toward the bacterial pathogen Pseudomonas syringae Pst DC3000 avrRpt2) by regulating positively pathogen-induced H3K4me3 enrichment and expression of defense genes involved in salicylic acid (SA)- and pipecolic acid (Pip)-mediated defense pathways (e.g. PR1, FMO1, ALD1 and SARD4). This is Lysine-specific demethylase JMJ14 from Arabidopsis thaliana (Mouse-ear cress).